The following is a 313-amino-acid chain: Intelectin-1 (313 aa).

Residues 1 to 18 (MNQLSFLLFLIATTRGWS) form the signal peptide. A Fibrinogen C-terminal domain is found at 32 to 255 (SSSPSLPRSC…AANALCAGMR (224 aa)). Cysteines 41 and 70 form a disulfide. The Ca(2+) site is built by His-86, Glu-87, Asp-89, Gly-92, Gly-97, Asp-98, and Asp-133. 3 cysteine pairs are disulfide-bonded: Cys-94/Cys-280, Cys-199/Cys-259, and Cys-251/Cys-265. N-linked (GlcNAc...) asparagine glycosylation is present at Asn-163. Asn-260, Glu-262, Glu-274, and Asp-282 together coordinate Ca(2+). A carbohydrate contacts are provided by residues 262–263 (EH) and Glu-274. A lipid anchor (GPI-anchor amidated serine) is attached at Ser-298. A propeptide spanning residues 299-313 (SSREITEAAVLLFYR) is cleaved from the precursor.

In terms of assembly, homotrimer; disulfide-linked. May interact with LTF. N-glycosylated. As to expression, highly expressed in omental adipose tissue where it is found in stromal vascular cells but not in fat cells but is barely detectable in subcutaneous adipose tissue (at protein level). Highly expressed in the small intestine. Also found in the heart, testis, colon, salivary gland, skeletal muscle, pancreas and thyroid and, to a lesser degree, in the uterus, spleen, prostate, lymph node and thymus.

The protein resides in the cell membrane. It is found in the secreted. Functionally, lectin that specifically recognizes microbial carbohydrate chains in a calcium-dependent manner. Binds to microbial glycans that contain a terminal acyclic 1,2-diol moiety, including beta-linked D-galactofuranose (beta-Galf), D-phosphoglycerol-modified glycans, D-glycero-D-talo-oct-2-ulosonic acid (KO) and 3-deoxy-D-manno-oct-2-ulosonic acid (KDO). Binds to glycans from Gram-positive and Gram-negative bacteria, including K.pneumoniae, S.pneumoniae, Y.pestis, P.mirabilis and P.vulgaris. Does not bind human glycans. Probably plays a role in the defense system against microorganisms. May function as adipokine that has no effect on basal glucose uptake but enhances insulin-stimulated glucose uptake in adipocytes. Increases AKT phosphorylation in the absence and presence of insulin. May interact with lactoferrin/LTF and increase its uptake, and may thereby play a role in iron absorption. The protein is Intelectin-1 (ITLN1) of Homo sapiens (Human).